Reading from the N-terminus, the 128-residue chain is Small ribosomal subunit protein uS10 (128 aa).

This sequence belongs to the universal ribosomal protein uS10 family.

The chain is Small ribosomal subunit protein uS10 (RPS20) from Oryza sativa subsp. japonica (Rice).